An 87-amino-acid chain; its full sequence is RNA-binding protein Hfq (87 aa).

In terms of domain architecture, Sm spans 9–68 (DPFLNALRRERIPVSIYLVNGIKLQGQIESFDQFVILLKNTVNQMVYKHAISTVVPARPV). Positions 65–87 (ARPVSHHSGDRPASDRPAEKSEE) are disordered. Residues 71–87 (HSGDRPASDRPAEKSEE) show a composition bias toward basic and acidic residues.

Belongs to the Hfq family.

Its function is as follows. RNA chaperone that binds small regulatory RNA (sRNAs) and mRNAs to facilitate mRNA translational regulation in response to envelope stress, environmental stress and changes in metabolite concentrations. Also binds with high specificity to tRNAs. Essential for virulence in the suckling mouse model of cholera pathogenesis. This is RNA-binding protein Hfq from Vibrio cholerae serotype O1 (strain ATCC 39315 / El Tor Inaba N16961).